The sequence spans 189 residues: Flavin prenyltransferase UbiX (189 aa).

FMN contacts are provided by residues 10 to 12, Ser-36, 91 to 94, and Arg-126; these read GAS and STNT. Tyr-156 and Lys-172 together coordinate dimethylallyl phosphate.

This sequence belongs to the UbiX/PAD1 family.

It carries out the reaction dimethylallyl phosphate + FMNH2 = prenylated FMNH2 + phosphate. Flavin prenyltransferase that catalyzes the synthesis of the prenylated FMN cofactor (prenyl-FMN) for 4-hydroxy-3-polyprenylbenzoic acid decarboxylase UbiD. The prenyltransferase is metal-independent and links a dimethylallyl moiety from dimethylallyl monophosphate (DMAP) to the flavin N5 and C6 atoms of FMN. In Aquifex aeolicus (strain VF5), this protein is Flavin prenyltransferase UbiX.